The sequence spans 555 residues: Chaperonin GroEL (555 aa).

ATP contacts are provided by residues 29 to 32 (TLGP), lysine 50, 86 to 90 (DGTTT), glycine 418, and aspartate 499. The interval 528 to 555 (HEEDNNTGNRSGGGVGGGHHGGMGGMDF) is disordered. The segment covering 537–555 (RSGGGVGGGHHGGMGGMDF) has biased composition (gly residues).

The protein belongs to the chaperonin (HSP60) family. In terms of assembly, forms a cylinder of 14 subunits composed of two heptameric rings stacked back-to-back. Interacts with the co-chaperonin GroES.

It is found in the cytoplasm. The catalysed reaction is ATP + H2O + a folded polypeptide = ADP + phosphate + an unfolded polypeptide.. Together with its co-chaperonin GroES, plays an essential role in assisting protein folding. The GroEL-GroES system forms a nano-cage that allows encapsulation of the non-native substrate proteins and provides a physical environment optimized to promote and accelerate protein folding. The polypeptide is Chaperonin GroEL (Orientia tsutsugamushi (strain Ikeda) (Rickettsia tsutsugamushi)).